The primary structure comprises 146 residues: Phage-like element PBSX protein XkdJ (146 aa).

This sequence to B.subtilis YqbJ.

This is Phage-like element PBSX protein XkdJ (xkdJ) from Bacillus subtilis (strain 168).